Here is a 222-residue protein sequence, read N- to C-terminus: NAD(P)H-hydrate epimerase (222 aa).

The 201-residue stretch at 9 to 209 (MQQIDSYTIE…DIGLRLPEDF (201 aa)) folds into the YjeF N-terminal domain. 57–61 (NNGAD) serves as a coordination point for (6S)-NADPHX. K(+) is bound by residues Asn-58 and Asp-119. Residues 123 to 129 (GVGLNNT) and Asp-152 each bind (6S)-NADPHX. Residue Thr-155 participates in K(+) binding.

The protein belongs to the NnrE/AIBP family. Requires K(+) as cofactor.

It carries out the reaction (6R)-NADHX = (6S)-NADHX. The enzyme catalyses (6R)-NADPHX = (6S)-NADPHX. Functionally, catalyzes the epimerization of the S- and R-forms of NAD(P)HX, a damaged form of NAD(P)H that is a result of enzymatic or heat-dependent hydration. This is a prerequisite for the S-specific NAD(P)H-hydrate dehydratase to allow the repair of both epimers of NAD(P)HX. The protein is NAD(P)H-hydrate epimerase of Leuconostoc citreum (strain KM20).